The sequence spans 473 residues: Double-stranded RNA-binding protein 7 (473 aa).

A compositionally biased stretch (pro residues) spans 1-10 (MDMPPTPLPP). Positions 1–22 (MDMPPTPLPPETANTSPAPNGA) are disordered. 2 consecutive DRBM domains span residues 33-102 (VFKS…EIVK) and 118-185 (LCKN…AIQG). Basic and acidic residues-rich tracts occupy residues 286–307 (KRVEAEPPRDIEMVQPDKENQH), 317–327 (DEARVEQEPSR), and 416–427 (VDARVVKEESPR). Disordered regions lie at residues 286 to 329 (KRVE…SRDI) and 393 to 473 (QLNE…MSEE). Over residues 433-450 (EATNMKETPKNSAVCNSP) the composition is skewed to polar residues.

Binds double-stranded RNA. This is Double-stranded RNA-binding protein 7 (DRB7) from Oryza sativa subsp. japonica (Rice).